The following is a 608-amino-acid chain: MATGQLFSRNTQALFYNYKQLPIQRMLDFDFLCGRETPSVAGIINPGSEGFQKLFFGQEEIAIPVHAAIEAACAAHPTADVFINFASFRSAAASSMAALKQPTIKVVAIIAEGVPESDTKQLIAYARANNKVIIGPATVGGVQAGAFKIGDTAGTIDNIIQCKLYRPGSVGFVSKSGGMSNEMYNTIARVTDGIYEGIAIGGDVFPGSTLSDHILRFNNIPQIKMVVVLGELGGRDEYSLVEAMKQGKVTKPVVAWVSGTCARLFKSEVQFGHAGAKSGGEMESAQAKNQALQDAGATVPTSFEALEVAIKETFDKLVEEGKVSPIKEVTPPQIPEDLSSAIKSGKVRAPTHIISTISDDRGEEPCYAGVPMSSIIEQGYGVGDVISLLWFKRSLPRYCTKFIEICIMLCADHGPCVSGAHNTIVTARAGKDLVSSLVSGLLTIGPRFGGAIDDAARYFKDACDRNLTPYEFVEGMKKKGIRVPGIGHRIKSRDNRDKRVELLQKFARSNFPAVKYMEYAVQVETYTLSKANNLVLNVDGAIGSLFLDLLAGSGMFTKQEIDEIVQIGYLNGLFVLARSIGLIGHTFDQKRLKQPLYRHPWEDVLYTK.

Residues 214–234 (ILRF…ELGG) and 265–291 (FKSE…KNQA) each bind ATP. Glutamate 231 is a binding site for Mg(2+). The active-site Tele-phosphohistidine intermediate is histidine 273. 292–302 (LQDAGATVPTS) provides a ligand contact to CoA.

This sequence belongs to the succinate/malate CoA ligase alpha subunit family. As to quaternary structure, heterooctamer of 4 alpha and 4 beta chains.

It is found in the cytoplasm. Its subcellular location is the cytosol. The catalysed reaction is oxaloacetate + acetyl-CoA + ADP + phosphate = citrate + ATP + CoA. Its function is as follows. ATP citrate-lyase is the primary enzyme responsible for the synthesis of cytosolic acetyl-CoA, used for the elongation of fatty acids and biosynthesis of isoprenoids, flavonoids and malonated derivatives. May supply substrate to the cytosolic acetyl-CoA carboxylase, which generates the malonyl-CoA used for the synthesis of a multitude of compounds, including very long chain fatty acids and flavonoids. Required for normal growth and development and elongation of C18 fatty acids to C20 to C24 fatty acids in seeds. In contrast to all known animal ACL enzymes having a homomeric structure, plant ACLs are composed of alpha and beta chains. The protein is ATP-citrate synthase beta chain protein 1 (ACLB-1) of Arabidopsis thaliana (Mouse-ear cress).